A 417-amino-acid chain; its full sequence is Membrane protein UL43 (417 aa).

Positions 1-21 (MLRNDSHRAVSPEDGQGRVDD) are disordered. The next 5 helical transmembrane spans lie at 57–77 (GPYA…LGFM), 90–110 (IYAW…SLGE), 119–139 (APGP…LLVL), 146–166 (LFLL…VGGL), and 175–195 (WWIG…GPGA). The segment at 217–254 (AGESLSRRPPEDPERPGVPGPPSPPTPQRSHGPPADEV) is disordered. Basic and acidic residues predominate over residues 221-231 (LSRRPPEDPER). Pro residues predominate over residues 232 to 243 (PGVPGPPSPPTP). Transmembrane regions (helical) follow at residues 263 to 283 (ENVW…VKTV), 291 to 311 (PGPG…AVAL), 323 to 343 (LTDP…GLVF), 348 to 368 (VVVY…VLGL), and 389 to 409 (GLFF…CPPG).

This sequence belongs to the alphaherpesvirinae HHV-1 UL43 family.

The protein localises to the membrane. This Human herpesvirus 1 (strain 17) (HHV-1) protein is Membrane protein UL43.